A 146-amino-acid polypeptide reads, in one-letter code: Large ribosomal subunit protein eL32 (146 aa).

It belongs to the eukaryotic ribosomal protein eL32 family.

This chain is Large ribosomal subunit protein eL32 (rpl32e), found in Methanocaldococcus jannaschii (strain ATCC 43067 / DSM 2661 / JAL-1 / JCM 10045 / NBRC 100440) (Methanococcus jannaschii).